The primary structure comprises 320 residues: MGCQDEQLVQTICDLYEKISKLESLKPSEDVNILFKQLVSTCIPPNPNIDVTKMCDRVQEIRLNLIKICGLAEGHLENHFSSILTSYQDNPLHHLNIFPYYNNYLKLGKLEFDLLEQNLNGFVPKSVAFIGSGPLPLTSIVLASFHLKDTIFHNFDIDPSANSLASLLVSSDPDISQRMFFHTVDIMDVTESLKSFDVVFLAALVGMNKEEKVKVIEHLQKHMAPGAVLMLRSAHGPRAFLYPIVEPCDLQGFEVLSIYHPTDDVINSVVISKKHPVVSIGNVGGPNSCLLKPCNCSKTHAKMNKNMMIEEFGAREEQLS.

This sequence belongs to the nicotianamine synthase (NAS)-like family. In shoots.

The catalysed reaction is 3 S-adenosyl-L-methionine = nicotianamine + 3 S-methyl-5'-thioadenosine + 3 H(+). In terms of biological role, synthesizes nicotianamine, a polyamine which serves as a sensor for the physiological iron status within the plant, and/or might be involved in the transport of iron. The polypeptide is Nicotianamine synthase 3 (NAS3) (Arabidopsis thaliana (Mouse-ear cress)).